A 214-amino-acid polypeptide reads, in one-letter code: NKG2-D type II integral membrane protein (214 aa).

The Cytoplasmic portion of the chain corresponds to 1-56; that stretch reads MGWIRDRRSPSSMEIRELHNRDVINRGAFKSRQKRTQTLITSKCGENPSPFFLARS. Residues 57–77 traverse the membrane as a helical; Signal-anchor for type II membrane protein segment; it reads IAIAMGIRFIVMVMIYSGMII. At 78 to 214 the chain is on the extracellular side; the sequence is NLLFNQEAPS…NTYICMKRTV (137 aa). 2 cysteine pairs are disulfide-bonded: C94/C103 and C97/C108. Residues 98 to 210 enclose the C-type lectin domain; the sequence is PKNWICYRNS…CLTLNTYICM (113 aa). N-linked (GlcNAc...) asparagine glycosylation is found at N113, N129, N161, and N184. Disulfide bonds link C125–C209 and C187–C201.

In terms of assembly, homodimer; disulfide-linked. Heterohexamer composed of two subunits of KLRK1 and four subunits of HCST/DAP10. Interacts (via transmembrane domain) with HCST/DAP10 (via transmembrane domain); the interaction is required for KLRK1 NK cell surface and induces NK cell-mediated cytotoxicity. Can form disulfide-bonded heterodimer with CD94. Interacts with CEACAM1; recruits PTPN6 that dephosphorylates VAV1. Detected in peripheral blood leukocytes, macrophages, monocytes and natural killer cells.

It localises to the cell membrane. Its function is as follows. Functions as an activating and costimulatory receptor involved in immunosurveillance upon binding to various cellular stress-inducible ligands displayed at the surface of autologous tumor cells and virus-infected cells. Provides both stimulatory and costimulatory innate immune responses on activated killer (NK) cells, leading to cytotoxic activity. Acts as a costimulatory receptor for T-cell receptor (TCR) in CD8(+) T-cell-mediated adaptive immune responses by amplifying T-cell activation. Stimulates perforin-mediated elimination of ligand-expressing tumor cells. Signaling involves calcium influx, culminating in the expression of TNF-alpha. Participates in NK cell-mediated bone marrow graft rejection. May play a regulatory role in differentiation and survival of NK cells. Binds to ligands belonging to various subfamilies of MHC class I-related glycoproteins. This Sus scrofa (Pig) protein is NKG2-D type II integral membrane protein (KLRK1).